Consider the following 827-residue polypeptide: Lon protease 2 (827 aa).

The interval 1–22 (MSDEKKKGSAASAMPTAMAPPG) is disordered. A compositionally biased stretch (low complexity) spans 9–21 (SAASAMPTAMAPP). The region spanning 33–227 (LPILPLRNSV…LVLELLNRKR (195 aa)) is the Lon N-terminal domain. Residue 379 to 386 (GPPGVGKT) participates in ATP binding. The region spanning 615 to 796 (TEVPGVATGL…DDVLKAALET (182 aa)) is the Lon proteolytic domain. Residues serine 702 and lysine 745 contribute to the active site. The interval 799–827 (VGVAGTPGGEPGKEAPLPKPAESAPEVRA) is disordered.

Belongs to the peptidase S16 family. In terms of assembly, homohexamer. Organized in a ring with a central cavity.

Its subcellular location is the cytoplasm. The enzyme catalyses Hydrolysis of proteins in presence of ATP.. ATP-dependent serine protease that mediates the selective degradation of mutant and abnormal proteins as well as certain short-lived regulatory proteins. Required for cellular homeostasis and for survival from DNA damage and developmental changes induced by stress. Degrades polypeptides processively to yield small peptide fragments that are 5 to 10 amino acids long. Binds to DNA in a double-stranded, site-specific manner. This Myxococcus xanthus protein is Lon protease 2.